Here is a 121-residue protein sequence, read N- to C-terminus: Large ribosomal subunit protein bL20 (121 aa).

Belongs to the bacterial ribosomal protein bL20 family.

Functionally, binds directly to 23S ribosomal RNA and is necessary for the in vitro assembly process of the 50S ribosomal subunit. It is not involved in the protein synthesizing functions of that subunit. The protein is Large ribosomal subunit protein bL20 of Dinoroseobacter shibae (strain DSM 16493 / NCIMB 14021 / DFL 12).